Reading from the N-terminus, the 106-residue chain is Small ribosomal subunit protein uS10 (106 aa).

Belongs to the universal ribosomal protein uS10 family. In terms of assembly, part of the 30S ribosomal subunit.

In terms of biological role, involved in the binding of tRNA to the ribosomes. This Pyrobaculum calidifontis (strain DSM 21063 / JCM 11548 / VA1) protein is Small ribosomal subunit protein uS10.